A 705-amino-acid chain; its full sequence is Elongation factor G 2 (705 aa).

The tr-type G domain maps to 8–290 (ELYRNIGISA…AVLDYLPSPL (283 aa)). GTP-binding positions include 17–24 (AHIDAGKT), 88–92 (DTPGH), and 142–145 (NKMD).

It belongs to the TRAFAC class translation factor GTPase superfamily. Classic translation factor GTPase family. EF-G/EF-2 subfamily.

It localises to the cytoplasm. Functionally, catalyzes the GTP-dependent ribosomal translocation step during translation elongation. During this step, the ribosome changes from the pre-translocational (PRE) to the post-translocational (POST) state as the newly formed A-site-bound peptidyl-tRNA and P-site-bound deacylated tRNA move to the P and E sites, respectively. Catalyzes the coordinated movement of the two tRNA molecules, the mRNA and conformational changes in the ribosome. The sequence is that of Elongation factor G 2 from Bordetella avium (strain 197N).